The primary structure comprises 406 residues: Acetylornithine/succinyldiaminopimelate aminotransferase (406 aa).

Pyridoxal 5'-phosphate-binding positions include 108 to 109 (GT) and Phe-141. Arg-144 is a binding site for N(2)-acetyl-L-ornithine. 226–229 (DEVQ) serves as a coordination point for pyridoxal 5'-phosphate. Residue Lys-255 is modified to N6-(pyridoxal phosphate)lysine. Ser-283 serves as a coordination point for N(2)-acetyl-L-ornithine. Thr-284 serves as a coordination point for pyridoxal 5'-phosphate.

The protein belongs to the class-III pyridoxal-phosphate-dependent aminotransferase family. ArgD subfamily. As to quaternary structure, homodimer. Requires pyridoxal 5'-phosphate as cofactor.

The protein resides in the cytoplasm. It carries out the reaction N(2)-acetyl-L-ornithine + 2-oxoglutarate = N-acetyl-L-glutamate 5-semialdehyde + L-glutamate. The catalysed reaction is N-succinyl-(2S,6S)-2,6-diaminopimelate + 2-oxoglutarate = (S)-2-succinylamino-6-oxoheptanedioate + L-glutamate. It participates in amino-acid biosynthesis; L-arginine biosynthesis; N(2)-acetyl-L-ornithine from L-glutamate: step 4/4. It functions in the pathway amino-acid biosynthesis; L-lysine biosynthesis via DAP pathway; LL-2,6-diaminopimelate from (S)-tetrahydrodipicolinate (succinylase route): step 2/3. Its function is as follows. Involved in both the arginine and lysine biosynthetic pathways. This is Acetylornithine/succinyldiaminopimelate aminotransferase from Escherichia coli O157:H7.